The chain runs to 129 residues: Large ribosomal subunit protein bL21 (129 aa).

Positions Thr102–Ala129 are disordered. Over residues Glu116 to Ala129 the composition is skewed to basic and acidic residues.

The protein belongs to the bacterial ribosomal protein bL21 family. As to quaternary structure, part of the 50S ribosomal subunit. Contacts protein L20.

Functionally, this protein binds to 23S rRNA in the presence of protein L20. In Bradyrhizobium diazoefficiens (strain JCM 10833 / BCRC 13528 / IAM 13628 / NBRC 14792 / USDA 110), this protein is Large ribosomal subunit protein bL21.